The following is an 89-amino-acid chain: Small ribosomal subunit protein uS15 (89 aa).

Belongs to the universal ribosomal protein uS15 family. As to quaternary structure, part of the 30S ribosomal subunit. Forms a bridge to the 50S subunit in the 70S ribosome, contacting the 23S rRNA.

One of the primary rRNA binding proteins, it binds directly to 16S rRNA where it helps nucleate assembly of the platform of the 30S subunit by binding and bridging several RNA helices of the 16S rRNA. Its function is as follows. Forms an intersubunit bridge (bridge B4) with the 23S rRNA of the 50S subunit in the ribosome. The protein is Small ribosomal subunit protein uS15 of Beijerinckia indica subsp. indica (strain ATCC 9039 / DSM 1715 / NCIMB 8712).